The chain runs to 298 residues: Tyrosine recombinase XerC (298 aa).

Positions 1-83 (MHAAVERFLH…ALSRFADHLV (83 aa)) constitute a Core-binding (CB) domain. In terms of domain architecture, Tyr recombinase spans 104 to 283 (HLPRPVDVDQ…DWQHLADAYD (180 aa)). Active-site residues include R144, K166, H235, R238, and H261. Y270 (O-(3'-phospho-DNA)-tyrosine intermediate) is an active-site residue.

Belongs to the 'phage' integrase family. XerC subfamily. As to quaternary structure, forms a cyclic heterotetrameric complex composed of two molecules of XerC and two molecules of XerD.

The protein localises to the cytoplasm. In terms of biological role, site-specific tyrosine recombinase, which acts by catalyzing the cutting and rejoining of the recombining DNA molecules. The XerC-XerD complex is essential to convert dimers of the bacterial chromosome into monomers to permit their segregation at cell division. It also contributes to the segregational stability of plasmids. The polypeptide is Tyrosine recombinase XerC (Chromohalobacter salexigens (strain ATCC BAA-138 / DSM 3043 / CIP 106854 / NCIMB 13768 / 1H11)).